Consider the following 229-residue polypeptide: Urease accessory protein UreF (229 aa).

The protein belongs to the UreF family. In terms of assembly, ureD, UreF and UreG form a complex that acts as a GTP-hydrolysis-dependent molecular chaperone, activating the urease apoprotein by helping to assemble the nickel containing metallocenter of UreC. The UreE protein probably delivers the nickel.

It is found in the cytoplasm. Required for maturation of urease via the functional incorporation of the urease nickel metallocenter. This is Urease accessory protein UreF from Trichormus variabilis (strain ATCC 29413 / PCC 7937) (Anabaena variabilis).